Reading from the N-terminus, the 89-residue chain is Cell division topological specificity factor (89 aa).

It belongs to the MinE family.

Functionally, prevents the cell division inhibition by proteins MinC and MinD at internal division sites while permitting inhibition at polar sites. This ensures cell division at the proper site by restricting the formation of a division septum at the midpoint of the long axis of the cell. This is Cell division topological specificity factor from Proteus mirabilis (strain HI4320).